A 227-amino-acid polypeptide reads, in one-letter code: MTKGILGRKVGMTQVFTESGELIAVTAVEATPNVVLQVKNIATDGYNAIQLGYQDKRTVLSNKPEQGHASKANTTPKRYVREVRDAEGEFNAGDEIKVDTFQAGDYVDVTGITKGHGFQGAIKKLGQSRGPMAHGSRYHRRPGSMGAIINRVFKGKLLPGRMGNNKRTMQNVAIVHVDVENNLLLLKGNVPGANKSLLTIKSTVKVNAKHPEVKMAGVSASATTEEA.

It belongs to the universal ribosomal protein uL3 family. Part of the 50S ribosomal subunit. Forms a cluster with proteins L14 and L19.

Functionally, one of the primary rRNA binding proteins, it binds directly near the 3'-end of the 23S rRNA, where it nucleates assembly of the 50S subunit. The protein is Large ribosomal subunit protein uL3 of Leuconostoc citreum (strain KM20).